The chain runs to 1081 residues: DNA polymerase delta catalytic subunit (1081 aa).

Residues 1-22 (MTSKRPGGSSFQPEVKRKRESD) are disordered. Residues Cys981, Cys984, Cys998, and Cys1001 each coordinate Zn(2+). A CysA-type zinc finger spans residues 981–1001 (CLGCKSVLPRAESENAVCKHC). Residues Cys1030, Cys1033, Cys1043, and Cys1048 each contribute to the [4Fe-4S] cluster site. A CysB motif motif is present at residues 1030-1048 (CQNCAKTMQDKVNCSARDC).

This sequence belongs to the DNA polymerase type-B family. In terms of assembly, heterodimer with subunits of 125 kDa and 50 kDa. The 125 kDa subunit contains the polymerase active site and most likely the active site for the 3'-5' exonuclease activity. [4Fe-4S] cluster serves as cofactor.

It is found in the nucleus. The catalysed reaction is DNA(n) + a 2'-deoxyribonucleoside 5'-triphosphate = DNA(n+1) + diphosphate. Possesses two enzymatic activities: DNA synthesis (polymerase) and an exonucleolytic activity that degrades single stranded DNA in the 3'- to 5'-direction. Required with its accessory proteins (proliferating cell nuclear antigen (PCNA) and replication factor C (RFC) or activator 1) for leading strand synthesis. Also involved in completing Okazaki fragments initiated by the DNA polymerase alpha/primase complex. The polypeptide is DNA polymerase delta catalytic subunit (Caenorhabditis elegans).